The primary structure comprises 284 residues: Serine protease 57 (284 aa).

Positions 1 to 35 are cleaved as a signal peptide; that stretch reads MPSSTAMVPGTRGGWHCLVLTTAAALTQLMWLPGC. Positions 40–269 constitute a Peptidase S1 domain; that stretch reads IVGGHEVTPH…FVTWIWDVVR (230 aa). Residues cysteine 65 and cysteine 81 are joined by a disulfide bond. Active-site charge relay system residues include histidine 80 and aspartate 128. Asparagine 135 carries an N-linked (GlcNAc...) asparagine glycan. 3 disulfides stabilise this stretch: cysteine 163–cysteine 230, cysteine 194–cysteine 208, and cysteine 220–cysteine 245. The active-site Charge relay system is the serine 224.

It belongs to the peptidase S1 family. In terms of processing, after cleavage of the signal peptide, the N-terminus is probably further processed by CTSC. Processing by CTSC is probably required for accumulation in cytoplasmic granules; in the absence of CTSC the protein does not accumulate. N-glycosylated.

Its subcellular location is the cytoplasmic granule lumen. The protein resides in the secreted. Serine protease that cleaves preferentially after Arg residues. Can also cleave after citrulline (deimidated arginine) and methylarginine residues. The protein is Serine protease 57 (Prss57) of Mus musculus (Mouse).